A 251-amino-acid polypeptide reads, in one-letter code: Vitamin B12 import ATP-binding protein BtuD (251 aa).

Residues 2 to 236 (IRVNSLQVDS…EVLQSVFGTS (235 aa)) form the ABC transporter domain. 30 to 37 (GPNGCGKS) contributes to the ATP binding site.

This sequence belongs to the ABC transporter superfamily. Vitamin B12 importer (TC 3.A.1.13.1) family. The complex is composed of two ATP-binding proteins (BtuD), two transmembrane proteins (BtuC) and a solute-binding protein (BtuF).

Its subcellular location is the cell inner membrane. The enzyme catalyses an R-cob(III)alamin(out) + ATP + H2O = an R-cob(III)alamin(in) + ADP + phosphate + H(+). Its function is as follows. Part of the ABC transporter complex BtuCDF involved in vitamin B12 import. Responsible for energy coupling to the transport system. This is Vitamin B12 import ATP-binding protein BtuD from Vibrio cholerae serotype O1 (strain ATCC 39541 / Classical Ogawa 395 / O395).